We begin with the raw amino-acid sequence, 324 residues long: Elongation factor P--(R)-beta-lysine ligase (324 aa).

A substrate-binding site is contributed by 75–77; sequence SPE. ATP contacts are provided by residues 99-101 and asparagine 108; that span reads RNK. Tyrosine 117 contacts substrate. An ATP-binding site is contributed by 243 to 244; that stretch reads EL. Position 250 (glutamate 250) interacts with substrate. Residue glycine 299 participates in ATP binding.

It belongs to the class-II aminoacyl-tRNA synthetase family. EpmA subfamily. Homodimer.

The enzyme catalyses D-beta-lysine + L-lysyl-[protein] + ATP = N(6)-((3R)-3,6-diaminohexanoyl)-L-lysyl-[protein] + AMP + diphosphate + H(+). With EpmB is involved in the beta-lysylation step of the post-translational modification of translation elongation factor P (EF-P). Catalyzes the ATP-dependent activation of (R)-beta-lysine produced by EpmB, forming a lysyl-adenylate, from which the beta-lysyl moiety is then transferred to the epsilon-amino group of a conserved specific lysine residue in EF-P. The chain is Elongation factor P--(R)-beta-lysine ligase from Buchnera aphidicola subsp. Acyrthosiphon pisum (strain APS) (Acyrthosiphon pisum symbiotic bacterium).